Consider the following 234-residue polypeptide: NLP effector protein 1 (234 aa).

Positions 1–18 (MQLRAFISVFASLACVNA) are cleaved as a signal peptide. N-linked (GlcNAc...) asparagine glycosylation is present at Asn66. The Conserved undecapeptide motif I signature appears at 102–112 (AFMYSWYMPKD). Residues 119-125 (GHRHDWE) carry the Hepta-peptide GHRHDWE motif II motif.

Belongs to the Necrosis inducing protein (NPP1) family.

The protein resides in the secreted. Its function is as follows. Secreted effector that contributes to virulence during infection by P.capsici. Induces distinct chlorosis at 3 days after inoculation of host C.annuum leaves, and all the chlorotic areas gradually turn brown and become moderately necrotic at 7 days after inoculation. Leads only to chlorotic areas, without necrosis at 7 days after non-host N.benthamiana leaves infection. Induces cell death in hot pepper. The polypeptide is NLP effector protein 1 (Phytophthora capsici).